The chain runs to 323 residues: Ubiquinone biosynthesis protein COQ4, mitochondrial (323 aa).

Residues histidine 205, aspartate 206, histidine 209, and glutamate 221 each coordinate Zn(2+).

Belongs to the COQ4 family. As to quaternary structure, component of a multi-subunit COQ enzyme complex, composed of at least COQ3, COQ4, COQ5, COQ6, COQ7 and COQ9. The cofactor is Zn(2+).

Its subcellular location is the mitochondrion inner membrane. It catalyses the reaction a 4-hydroxy-3-methoxy-5-(all-trans-polyprenyl)benzoate + H(+) = a 2-methoxy-6-(all-trans-polyprenyl)phenol + CO2. It functions in the pathway cofactor biosynthesis; ubiquinone biosynthesis. Its function is as follows. Lyase that catalyzes the C1-decarboxylation of 4-hydroxy-3-methoxy-5-(all-trans-polyprenyl)benzoic acid into 2-methoxy-6-(all-trans-polyprenyl)phenol during ubiquinone biosynthesis. The sequence is that of Ubiquinone biosynthesis protein COQ4, mitochondrial from Candida albicans (strain SC5314 / ATCC MYA-2876) (Yeast).